The sequence spans 251 residues: Triosephosphate isomerase (251 aa).

9-11 (NWK) lines the substrate pocket. H95 functions as the Electrophile in the catalytic mechanism. The Proton acceptor role is filled by E167. Residues G173, S213, and 234-235 (GG) contribute to the substrate site.

Belongs to the triosephosphate isomerase family. Homodimer.

The protein localises to the cytoplasm. It carries out the reaction D-glyceraldehyde 3-phosphate = dihydroxyacetone phosphate. It functions in the pathway carbohydrate biosynthesis; gluconeogenesis. It participates in carbohydrate degradation; glycolysis; D-glyceraldehyde 3-phosphate from glycerone phosphate: step 1/1. Functionally, involved in the gluconeogenesis. Catalyzes stereospecifically the conversion of dihydroxyacetone phosphate (DHAP) to D-glyceraldehyde-3-phosphate (G3P). The sequence is that of Triosephosphate isomerase from Geobacter metallireducens (strain ATCC 53774 / DSM 7210 / GS-15).